Consider the following 138-residue polypeptide: Thyrotropin subunit beta (138 aa).

Positions 1–20 are cleaved as a signal peptide; it reads MNAVVLFSVLFALACGQVSS. Cystine bridges form between C22/C72, C36/C87, C39/C125, C47/C103, C51/C105, and C108/C115. An N-linked (GlcNAc...) asparagine glycan is attached at N43. Positions 133 to 138 are excised as a propeptide; that stretch reads LGGFSG.

The protein belongs to the glycoprotein hormones subunit beta family. As to quaternary structure, heterodimer of a common alpha chain and a unique beta chain which confers biological specificity to thyrotropin, lutropin, follitropin and gonadotropin.

It localises to the secreted. Indispensable for the control of thyroid structure and metabolism. The chain is Thyrotropin subunit beta (Tshb) from Rattus norvegicus (Rat).